Consider the following 735-residue polypeptide: Disintegrin and metalloproteinase domain-containing protein 2 (735 aa).

The signal sequence occupies residues 1-16 (MWRVLFLLSGLGGLRM). The propeptide occupies 17 to 174 (DSNFDSLPVQ…FKLQSVEPQQ (158 aa)). 2 N-linked (GlcNAc...) asparagine glycosylation sites follow: asparagine 122 and asparagine 220. Residues 175-686 (DFAKYIEMHV…ENIYHSKPMR (512 aa)) lie on the Extracellular side of the membrane. Residues 178-375 (KYIEMHVIVE…QKSQCLHNQP (198 aa)) form the Peptidase M12B domain. Intrachain disulfides connect cysteine 287/cysteine 370, cysteine 329/cysteine 354, cysteine 331/cysteine 336, and cysteine 445/cysteine 465. N-linked (GlcNAc...) asparagine glycosylation is found at asparagine 353, asparagine 459, and asparagine 566. Residues 384–473 (QAVCGNAKLE…SCPENHYVQT (90 aa)) form the Disintegrin domain. The 34-residue stretch at 612–645 (LGYDCTTDKCNDRGVCNNKKHCHCSASYLPPDCS) folds into the EGF-like domain. Cystine bridges form between cysteine 616/cysteine 627, cysteine 621/cysteine 633, and cysteine 635/cysteine 644. The chain crosses the membrane as a helical span at residues 687–707 (WPFFLFIPFFIIFCVLIAIMV). The Cytoplasmic segment spans residues 708–735 (KVNFQRKKWRTEDYSSDEQPESESEPKG). Phosphoserine is present on serine 729.

The prodomain and the metalloprotease domain are cleaved during the epididymal maturation of the spermatozoa. Expressed specifically in spermatogenic cells in the seminiferous cells. Not detected in fetal tissues.

The protein localises to the membrane. Sperm surface membrane protein that may be involved in sperm-egg plasma membrane adhesion and fusion during fertilization. Could have a direct role in sperm-zona binding or migration of sperm from the uterus into the oviduct. Interactions with egg membrane could be mediated via binding between its disintegrin-like domain to one or more integrins receptors on the egg. This is a non catalytic metalloprotease-like protein. In Homo sapiens (Human), this protein is Disintegrin and metalloproteinase domain-containing protein 2 (ADAM2).